Reading from the N-terminus, the 369-residue chain is H-2 class I histocompatibility antigen, K-B alpha chain (369 aa).

An N-terminal signal peptide occupies residues 1 to 21 (MVPCTLLLLLAAALAPTQTRA). An alpha-1 region spans residues 22–111 (GPHSLRYFVT…LLGYYNQSKG (90 aa)). Over 22-305 (GPHSLRYFVT…EPPPSTVSNM (284 aa)) the chain is Extracellular. The N-linked (GlcNAc...) asparagine glycan is linked to asparagine 107. The alpha-2 stretch occupies residues 112 to 203 (GSHTIQVISG…KNGNATLLRT (92 aa)). Cysteine 122 and cysteine 185 are disulfide-bonded. A glycan (N-linked (GlcNAc...) asparagine) is linked at asparagine 197. Positions 204 to 295 (DSPKAHVTHH…GLPEPLTLRW (92 aa)) are alpha-3. One can recognise an Ig-like C1-type domain in the interval 206 to 294 (PKAHVTHHSR…QGLPEPLTLR (89 aa)). Cysteine 224 and cysteine 280 form a disulfide bridge. Residues 296–305 (EPPPSTVSNM) are connecting peptide. A helical transmembrane segment spans residues 306-328 (ATVAVLVVLGAAIVTGAVVAFVM). Topologically, residues 329-369 (KMRRRNTGGKGGDYALAPGSQTSDLSLPDCKVMVHDPHSLA) are cytoplasmic. 2 positions are modified to phosphoserine: serine 351 and serine 354.

Belongs to the MHC class I family. Heterodimer of an alpha chain and a beta chain (beta-2-microglobulin).

The protein localises to the membrane. Its function is as follows. Involved in the presentation of foreign antigens to the immune system. This chain is H-2 class I histocompatibility antigen, K-B alpha chain (H2-K1), found in Mus musculus (Mouse).